The chain runs to 344 residues: tRNA N6-adenosine threonylcarbamoyltransferase (344 aa).

Fe cation is bound by residues His111 and His115. Residues 134 to 138, Asp167, Gly180, Asp184, and Asn277 each bind substrate; that span reads LVSGG. Asp305 contributes to the Fe cation binding site.

The protein belongs to the KAE1 / TsaD family. Requires Fe(2+) as cofactor.

The protein localises to the cytoplasm. The catalysed reaction is L-threonylcarbamoyladenylate + adenosine(37) in tRNA = N(6)-L-threonylcarbamoyladenosine(37) in tRNA + AMP + H(+). Required for the formation of a threonylcarbamoyl group on adenosine at position 37 (t(6)A37) in tRNAs that read codons beginning with adenine. Is involved in the transfer of the threonylcarbamoyl moiety of threonylcarbamoyl-AMP (TC-AMP) to the N6 group of A37, together with TsaE and TsaB. TsaD likely plays a direct catalytic role in this reaction. In Microcystis aeruginosa (strain NIES-843 / IAM M-2473), this protein is tRNA N6-adenosine threonylcarbamoyltransferase.